A 581-amino-acid chain; its full sequence is Arginine--tRNA ligase (581 aa).

The 'HIGH' region signature appears at 126–136 (PNLAKEMHVGH).

This sequence belongs to the class-I aminoacyl-tRNA synthetase family. Monomer.

It localises to the cytoplasm. It catalyses the reaction tRNA(Arg) + L-arginine + ATP = L-arginyl-tRNA(Arg) + AMP + diphosphate. This is Arginine--tRNA ligase from Shewanella frigidimarina (strain NCIMB 400).